Consider the following 64-residue polypeptide: Large ribosomal subunit protein bL35 (64 aa).

The span at 1-42 shows a compositional bias: basic residues; sequence MPKAKTHSGASKRFRRTGTGKIVRQKANRRHLLEHKSSKRTR. The segment at 1-64 is disordered; the sequence is MPKAKTHSGA…TKRVKSLLNG (64 aa).

This sequence belongs to the bacterial ribosomal protein bL35 family.

The protein is Large ribosomal subunit protein bL35 of Mycobacterium ulcerans (strain Agy99).